Reading from the N-terminus, the 281-residue chain is ATP synthase gamma chain (281 aa).

It belongs to the ATPase gamma chain family. F-type ATPases have 2 components, CF(1) - the catalytic core - and CF(0) - the membrane proton channel. CF(1) has five subunits: alpha(3), beta(3), gamma(1), delta(1), epsilon(1). CF(0) has three main subunits: a, b and c.

It is found in the cell membrane. Its function is as follows. Produces ATP from ADP in the presence of a proton gradient across the membrane. The gamma chain is believed to be important in regulating ATPase activity and the flow of protons through the CF(0) complex. This Desulfitobacterium hafniense (strain DSM 10664 / DCB-2) protein is ATP synthase gamma chain.